The following is a 198-amino-acid chain: Probable GTP-binding protein EngB (198 aa).

Residues 22-195 (NRNEVAFVGR…IDKLFLEFAT (174 aa)) form the EngB-type G domain. GTP is bound by residues 30–37 (GRSNVGKS), 57–61 (GKTRL), 75–78 (DLPG), 142–145 (TKSD), and 174–176 (YSS). The Mg(2+) site is built by serine 37 and threonine 59.

The protein belongs to the TRAFAC class TrmE-Era-EngA-EngB-Septin-like GTPase superfamily. EngB GTPase family. Mg(2+) is required as a cofactor.

Its function is as follows. Necessary for normal cell division and for the maintenance of normal septation. The chain is Probable GTP-binding protein EngB from Clostridium botulinum (strain Alaska E43 / Type E3).